An 805-amino-acid polypeptide reads, in one-letter code: Probable inorganic carbon transporter subunit DabA (805 aa).

Positions 334, 336, 491, and 506 each coordinate Zn(2+).

The protein belongs to the inorganic carbon transporter (TC 9.A.2) DabA family. Forms a complex with DabB. Zn(2+) serves as cofactor.

It localises to the cell inner membrane. In terms of biological role, part of an energy-coupled inorganic carbon pump. The protein is Probable inorganic carbon transporter subunit DabA of Ruegeria sp. (strain TM1040) (Silicibacter sp.).